Consider the following 717-residue polypeptide: Segment polarity protein dishevelled homolog DVL-3 (717 aa).

Residues 1-82 (MGETKVIYHL…RVVCWLVSAD (82 aa)) form the DIX domain. The tract at residues 89–235 (GSVCADIQSD…PQIERSSSFS (147 aa)) is disordered. Positions 118–127 (HPNTRGSQEN) are enriched in polar residues. Positions 140–155 (ARRERPGRKETSEHAT) are enriched in basic and acidic residues. The segment covering 173 to 189 (ESSSTLMSSELDSTSFF) has biased composition (low complexity). Positions 199–210 (RFSNSTEQSSAS) are enriched in polar residues. Positions 212 to 224 (LMRRHKRRRRKPK) are enriched in basic residues. Positions 248 to 333 (TVTLNMEKYN…KPGPITLTVA (86 aa)) constitute a PDZ domain. The region spanning 421 to 495 (SESGLEVRDR…SEQCYYIFGD (75 aa)) is the DEP domain. Residues 552–653 (PDPAYIYGGG…THQSFGPPGI (102 aa)) form a disordered region. The segment covering 564–579 (GSQHSEGSRSSGSNRS) has biased composition (low complexity). Composition is skewed to basic and acidic residues over residues 580–593 (STEK…KGGD) and 602–618 (ESDH…RAAS). A compositionally biased stretch (basic residues) spans 629–645 (HRSHHSIAHSIRSHHTH).

It belongs to the DSH family. Expressed throughout the epidermis.

It localises to the cytoplasm. Its function is as follows. Involved in the signal transduction pathway mediated by multiple Wnt genes. Required during ciliogenesis for the docking of basal bodies to the apical plasma membrane. The protein is Segment polarity protein dishevelled homolog DVL-3 of Xenopus laevis (African clawed frog).